A 403-amino-acid polypeptide reads, in one-letter code: Alkaline protease 1 (403 aa).

Positions 1-21 (MLSIKRTLLLLGAVLPAVFGA) are cleaved as a signal peptide. Positions 22 to 125 (PVQETRRAAQ…QIWYIDALTT (104 aa)) are excised as a propeptide. Residues 36–120 (KYIVTFKPGT…HVEEDQIWYI (85 aa)) enclose the Inhibitor I9 domain. In terms of domain architecture, Peptidase S8 spans 130–403 (PWGLGSISHK…PNKLAYNGNA (274 aa)). Active-site charge relay system residues include aspartate 162 and histidine 193. Asparagine 253 and asparagine 307 each carry an N-linked (GlcNAc...) asparagine glycan. Serine 349 serves as the catalytic Charge relay system.

Belongs to the peptidase S8 family.

The protein localises to the secreted. The enzyme catalyses Hydrolysis of proteins with broad specificity, and of Bz-Arg-OEt &gt; Ac-Tyr-OEt. Does not hydrolyze peptide amides.. Its function is as follows. Secreted alkaline protease that allows assimilation of proteinaceous substrates. In Neosartorya fischeri (strain ATCC 1020 / DSM 3700 / CBS 544.65 / FGSC A1164 / JCM 1740 / NRRL 181 / WB 181) (Aspergillus fischerianus), this protein is Alkaline protease 1 (alp1).